The primary structure comprises 483 residues: BTB/POZ domain and ankyrin repeat-containing protein COCH (483 aa).

A BTB domain is found at 25-105; it reads SDVVFSVEGR…LYSGQVSIVP (81 aa). Residues 111-125 form a C2HC NPR-type zinc finger; that stretch reads RPNCGDRGCWHTHCT. Positions 114, 119, 121, and 124 each coordinate Zn(2+). 4 ANK repeats span residues 249–278, 279–308, 313–342, and 346–380; these read QKIR…LNLD, EALA…DVNF, TGKT…DPNV, and DGVT…KLRL. Disordered regions lie at residues 395-435 and 450-483; these read EEGN…NSNM and MSTS…SHDY. Over residues 398–414 the composition is skewed to low complexity; sequence NNNNNANNNNTGSSATN. Positions 456–465 are enriched in basic and acidic residues; sequence DSGDDDHNSN.

The protein belongs to the plant 'ANKYRIN-BTB/POZ' family. 'NOOT-BOP-COCH-like' (NBCL) subfamily. Homodimer.

The protein localises to the nucleus. It localises to the cytoplasm. The protein resides in the cell membrane. It participates in protein modification; protein ubiquitination. Its function is as follows. May act as a substrate-specific adapter of an E3 ubiquitin-protein ligase complex (CUL3-RBX1-BTB) which mediates the ubiquitination and subsequent proteasomal degradation of target proteins. Transcriptional co-regulator involved in the promotion of leaf and floral meristem fate and determinacy. Promotes normal stipule growth and development. Required for the abscission of senescent organs, probably by regulating the cell wall disorganization in abscission zones (AZs, e.g. pulvini at the base of leaves). Down-regulates UNI expression in primordia of leaves and secondary inflorescences, and thereby controls their sizes and/or structures. Involved in the coordination of the symbiotic nodule developmental program. Promotes the formation of root nodules by interacting directly with APP1 to modulate the expression of the nuclear transcription factor Y subunit (NF-YA1), a key nodulin. Necessary for the robust maintenance of nodule identity throughout the nodule developmental program. This is BTB/POZ domain and ankyrin repeat-containing protein COCH from Pisum sativum (Garden pea).